The chain runs to 164 residues: Pheromone-binding protein 2 (164 aa).

The first 22 residues, 1-22 (MIRKVLLSVLLAVLMTINLGQA), serve as a signal peptide directing secretion. 3 disulfides stabilise this stretch: cysteine 41/cysteine 76, cysteine 72/cysteine 130, and cysteine 119/cysteine 139.

This sequence belongs to the PBP/GOBP family. As to expression, antenna.

In terms of biological role, this major soluble protein in olfactory sensilla of male moths might serve to solubilize the extremely hydrophobic pheromone molecules and to transport pheromone through the aqueous lymph to receptors located on olfactory cilia. The chain is Pheromone-binding protein 2 from Antheraea pernyi (Chinese oak silk moth).